A 353-amino-acid polypeptide reads, in one-letter code: Farnesyl pyrophosphate synthase (353 aa).

The isopentenyl diphosphate site is built by K57, R60, and Q96. The residue at position 57 (K57) is an N6-(2-hydroxyisobutyryl)lysine; alternate. The residue at position 57 (K57) is an N6-acetyllysine; alternate. Residues D103 and D107 each contribute to the Mg(2+) site. R112 contributes to the dimethylallyl diphosphate binding site. Residue R113 coordinates isopentenyl diphosphate. Dimethylallyl diphosphate-binding residues include K200, T201, Q240, K257, and K266.

Belongs to the FPP/GGPP synthase family. Homodimer. Interacts with RSAD2. It depends on Mg(2+) as a cofactor.

The protein localises to the cytoplasm. The catalysed reaction is isopentenyl diphosphate + dimethylallyl diphosphate = (2E)-geranyl diphosphate + diphosphate. It carries out the reaction isopentenyl diphosphate + (2E)-geranyl diphosphate = (2E,6E)-farnesyl diphosphate + diphosphate. It functions in the pathway isoprenoid biosynthesis; farnesyl diphosphate biosynthesis; farnesyl diphosphate from geranyl diphosphate and isopentenyl diphosphate: step 1/1. The protein operates within isoprenoid biosynthesis; geranyl diphosphate biosynthesis; geranyl diphosphate from dimethylallyl diphosphate and isopentenyl diphosphate: step 1/1. With respect to regulation, inactivated by interferon-induced RSAD2. This inactivation may result of disruption of lipid rafts at the plasma membrane, and thus have an antiviral effect since many enveloped viruses need lipid rafts to bud efficiently out of the cell. In terms of biological role, key enzyme in isoprenoid biosynthesis which catalyzes the formation of farnesyl diphosphate (FPP), a precursor for several classes of essential metabolites including sterols, dolichols, carotenoids, and ubiquinones. FPP also serves as substrate for protein farnesylation and geranylgeranylation. Catalyzes the sequential condensation of isopentenyl pyrophosphate with the allylic pyrophosphates, dimethylallyl pyrophosphate, and then with the resultant geranylpyrophosphate to the ultimate product farnesyl pyrophosphate. In Mus musculus (Mouse), this protein is Farnesyl pyrophosphate synthase (Fdps).